Here is a 536-residue protein sequence, read N- to C-terminus: Membrane protein insertase YidC (536 aa).

5 helical membrane-spanning segments follow: residues 3–23, 346–366, 417–437, 454–474, and 494–514; these read LQRN…WKTW, ICGN…GITF, GGCF…YMLI, LSDQ…MFFI, and IPIL…LYYL.

The protein belongs to the OXA1/ALB3/YidC family. Type 1 subfamily. In terms of assembly, interacts with the Sec translocase complex via SecD. Specifically interacts with transmembrane segments of nascent integral membrane proteins during membrane integration.

It localises to the cell membrane. Required for the insertion and/or proper folding and/or complex formation of integral membrane proteins into the membrane. Involved in integration of membrane proteins that insert both dependently and independently of the Sec translocase complex, as well as at least some lipoproteins. Aids folding of multispanning membrane proteins. The chain is Membrane protein insertase YidC from Buchnera aphidicola subsp. Baizongia pistaciae (strain Bp).